The following is a 549-amino-acid chain: Zinc finger protein 18 (549 aa).

The SCAN box domain maps to 41–123; that stretch reads RQLFRQFRYQ…TLVESLKGDP (83 aa). A KRAB domain is found at 211-283; that stretch reads DLGASLLPAA…YLHVNEKIPR (73 aa). C2H2-type zinc fingers lie at residues 408 to 430, 436 to 458, 464 to 486, 492 to 514, and 520 to 542; these read PTCR…QRTH, FQCT…QRTH, CKCD…EKIH, YKCP…QRVH, and YKCS…QRSH.

The protein belongs to the krueppel C2H2-type zinc-finger protein family.

The protein localises to the nucleus. In terms of biological role, may be involved in transcriptional regulation. The protein is Zinc finger protein 18 (ZNF18) of Homo sapiens (Human).